The following is a 718-amino-acid chain: Myeloperoxidase (718 aa).

An N-terminal signal peptide occupies residues 1-15 (MKLLLALAGLLAPLA). The propeptide occupies 16–138 (MLQTSNGATP…SSGCAYQDVR (123 aa)). N-linked (GlcNAc...) asparagine glycosylation is present at Asn113. Cys141 and Cys154 are joined by a disulfide. A heme b-binding site is contributed by Asp234. His235 functions as the Proton acceptor in the catalytic mechanism. Asp236 is a Ca(2+) binding site. 2 cysteine pairs are disulfide-bonded: Cys255/Cys265 and Cys259/Cys283. A Cysteine sulfenic acid (-SOH) modification is found at Cys290. An N-linked (GlcNAc...) asparagine glycan is attached at Asn297. Thr308, Phe310, Asp312, and Ser314 together coordinate Ca(2+). N-linked (GlcNAc...) asparagine glycosylation is found at Asn329 and Asn365. Residues Cys361 and Cys372 are joined by a disulfide bond. Heme b is bound by residues Glu382 and Met383. An N-linked (GlcNAc...) asparagine glycan is attached at Asn457. His476 is a binding site for heme b. Disulfide bonds link Cys580-Cys637 and Cys678-Cys704. Residue Asn711 is glycosylated (N-linked (GlcNAc...) asparagine).

The protein belongs to the peroxidase family. XPO subfamily. In terms of assembly, homodimer; disulfide-linked. Each monomer consists of a light and a heavy chain. Found in a complex with CP and LTF; interacts directly with CP, which protects CP antioxidant properties by MPO. Ca(2+) is required as a cofactor. Requires heme b as cofactor.

The protein localises to the lysosome. The enzyme catalyses chloride + H2O2 + H(+) = hypochlorous acid + H2O. In terms of biological role, part of the host defense system of polymorphonuclear leukocytes. It is responsible for microbicidal activity against a wide range of organisms. In the stimulated PMN, MPO catalyzes the production of hypohalous acids, primarily hypochlorous acid in physiologic situations, and other toxic intermediates that greatly enhance PMN microbicidal activity. Mediates the proteolytic cleavage of alpha-1-microglobulin to form t-alpha-1-microglobulin, which potently inhibits oxidation of low density lipoprotein particles and limits vascular damage. The polypeptide is Myeloperoxidase (Mpo) (Mus musculus (Mouse)).